The chain runs to 302 residues: tRNA dimethylallyltransferase (302 aa).

21–28 (GPTASGKS) contacts ATP. Residue 23–28 (TASGKS) coordinates substrate.

Belongs to the IPP transferase family. As to quaternary structure, monomer. Requires Mg(2+) as cofactor.

The enzyme catalyses adenosine(37) in tRNA + dimethylallyl diphosphate = N(6)-dimethylallyladenosine(37) in tRNA + diphosphate. Its function is as follows. Catalyzes the transfer of a dimethylallyl group onto the adenine at position 37 in tRNAs that read codons beginning with uridine, leading to the formation of N6-(dimethylallyl)adenosine (i(6)A). This chain is tRNA dimethylallyltransferase, found in Paracoccus denitrificans (strain Pd 1222).